The following is a 200-amino-acid chain: Recombination protein RecR (200 aa).

A C4-type zinc finger spans residues 57–72 (CRQCRTLTEQELCPQC). One can recognise a Toprim domain in the interval 80–175 (TQLCVVEGPT…VASRIAHGVP (96 aa)).

The protein belongs to the RecR family.

May play a role in DNA repair. It seems to be involved in an RecBC-independent recombinational process of DNA repair. It may act with RecF and RecO. This chain is Recombination protein RecR, found in Pseudomonas putida (strain ATCC 700007 / DSM 6899 / JCM 31910 / BCRC 17059 / LMG 24140 / F1).